A 367-amino-acid chain; its full sequence is CCN family member 4 (367 aa).

Positions 1–22 (MRWFLPWTLAAVTAAAASTVLA) are cleaved as a signal peptide. An IGFBP N-terminal domain is found at 45–118 (RPQFCKWPCE…RYAIGVCAQV (74 aa)). 4 disulfide bridges follow: C49–C73, C53–C75, C55–C76, and C62–C79. N86 carries N-linked (GlcNAc...) asparagine glycosylation. Disulfide bonds link C87–C101 and C93–C115. The VWFC domain occupies 121–186 (VGCVLDGVRY…GHCCEQWVCE (66 aa)). N143 is a glycosylation site (N-linked (GlcNAc...) asparagine). One can recognise a TSP type-1 domain in the interval 215-260 (NCIAYTSPWSPCSTSCGLGVSTRISNVNAQCWPEQESRLCNLRPCD). 5 disulfides stabilise this stretch: C273/C310, C290/C324, C301/C340, C304/C342, and C309/C346. In terms of domain architecture, CTCK spans 273 to 347 (CLAVYQPEAS…NACFCNLSCR (75 aa)). A glycan (N-linked (GlcNAc...) asparagine) is linked at N284. N343 carries N-linked (GlcNAc...) asparagine glycosylation.

It belongs to the CCN family. In terms of tissue distribution, expressed in heart, kidney, lung, pancreas, placenta, ovary, small intestine and spleen. Isoform 2 is expressed predominantly in scirrhous gastric carcinoma and, weakly in placenta. Overexpression is associated with several cancers including breast cancer and colon tumors. Isoform 2 is overexpressed in scirrhous gastric carcinoma.

It localises to the secreted. Functionally, downstream regulator in the Wnt/Frizzled-signaling pathway. Associated with cell survival. Attenuates p53-mediated apoptosis in response to DNA damage through activation of AKT kinase. Up-regulates the anti-apoptotic Bcl-X(L) protein. Adheres to skin and melanoma fibroblasts. In vitro binding to skin fibroblasts occurs through the proteoglycans, decorin and biglycan. The polypeptide is CCN family member 4 (Homo sapiens (Human)).